The sequence spans 118 residues: uncharacterized protein (118 aa).

A disulfide bridge connects residues cysteine 11 and cysteine 14.

This sequence belongs to the ArsC family.

This is an uncharacterized protein from Bacillus subtilis (strain 168).